The sequence spans 36 residues: Amanexitide proprotein 1 (36 aa).

The propeptide occupies 1–10 (MSDINTARLP). Residues 11–19 (VFSLPVFFP) constitute a cross-link (cyclopeptide (Val-Pro)). A propeptide spanning residues 20–36 (FVSDDIQAVLTRGESLC) is cleaved from the precursor.

It belongs to the MSDIN fungal toxin family. Post-translationally, processed by the macrocyclase-peptidase enzyme POPB to yield a toxic cyclic nonapeptide. POPB first removes 10 residues from the N-terminus. Conformational trapping of the remaining peptide forces the enzyme to release this intermediate rather than proceed to macrocyclization. The enzyme rebinds the remaining peptide in a different conformation and catalyzes macrocyclization of the N-terminal 9 residues. Expressed in basidiocarps.

In terms of biological role, cyclic nonapeptide that belongs to the MSDIN-like toxin family responsible for a large number of food poisoning cases and deaths. This is Amanexitide proprotein 1 from Amanita exitialis (Guangzhou destroying angel).